The sequence spans 87 residues: UPF0367 protein Pro_0144 (87 aa).

The protein belongs to the UPF0367 family.

This is UPF0367 protein Pro_0144 from Prochlorococcus marinus (strain SARG / CCMP1375 / SS120).